The primary structure comprises 319 residues: Acetyl-coenzyme A carboxylase carboxyl transferase subunit alpha (319 aa).

The 258-residue stretch at 39–296 (EINRLRSKSI…KTQLLLDLTE (258 aa)) folds into the CoA carboxyltransferase C-terminal domain.

It belongs to the AccA family. In terms of assembly, acetyl-CoA carboxylase is a heterohexamer composed of biotin carboxyl carrier protein (AccB), biotin carboxylase (AccC) and two subunits each of ACCase subunit alpha (AccA) and ACCase subunit beta (AccD).

Its subcellular location is the cytoplasm. The enzyme catalyses N(6)-carboxybiotinyl-L-lysyl-[protein] + acetyl-CoA = N(6)-biotinyl-L-lysyl-[protein] + malonyl-CoA. The protein operates within lipid metabolism; malonyl-CoA biosynthesis; malonyl-CoA from acetyl-CoA: step 1/1. In terms of biological role, component of the acetyl coenzyme A carboxylase (ACC) complex. First, biotin carboxylase catalyzes the carboxylation of biotin on its carrier protein (BCCP) and then the CO(2) group is transferred by the carboxyltransferase to acetyl-CoA to form malonyl-CoA. The polypeptide is Acetyl-coenzyme A carboxylase carboxyl transferase subunit alpha (Blochmanniella pennsylvanica (strain BPEN)).